Reading from the N-terminus, the 353-residue chain is tRNA-splicing endonuclease (353 aa).

Active-site residues include Y289, H300, and K331.

This sequence belongs to the tRNA-intron endonuclease family. Archaeal long subfamily. Homodimer.

It catalyses the reaction pretRNA = a 3'-half-tRNA molecule with a 5'-OH end + a 5'-half-tRNA molecule with a 2',3'-cyclic phosphate end + an intron with a 2',3'-cyclic phosphate and a 5'-hydroxyl terminus.. In terms of biological role, endonuclease that removes tRNA introns. Cleaves pre-tRNA at the 5'- and 3'-splice sites to release the intron. The products are an intron and two tRNA half-molecules bearing 2',3' cyclic phosphate and 5'-OH termini. Recognizes a pseudosymmetric substrate in which 2 bulged loops of 3 bases are separated by a stem of 4 bp. The chain is tRNA-splicing endonuclease from Methanosarcina mazei (strain ATCC BAA-159 / DSM 3647 / Goe1 / Go1 / JCM 11833 / OCM 88) (Methanosarcina frisia).